A 1092-amino-acid polypeptide reads, in one-letter code: Probable cellulose synthase A catalytic subunit 5 [UDP-forming] (1092 aa).

Residues 1–279 (MEASAGLVAG…SSSLVNPYRM (279 aa)) are Cytoplasmic-facing. The Zn(2+) site is built by cysteine 39, cysteine 42, cysteine 58, cysteine 61, cysteine 66, cysteine 69, cysteine 81, and cysteine 84. The RING-type; degenerate zinc finger occupies 39-85 (CQICGDDVGLTPDGEPFVACNECAFPVCRDCYEYERREGTQNCPQCK). A helical transmembrane segment spans residues 280–300 (IIIIRLVVLGFFFHYRVMHPV). Residues 301–302 (PD) are Extracellular-facing. A helical membrane pass occupies residues 303 to 323 (AFALWLISVICEIWFAMSWIL). The Cytoplasmic segment spans residues 324–868 (DQFPKWFPIE…CLERFSYINS (545 aa)). UDP-alpha-D-glucose contacts are provided by serine 362, lysine 368, glutamate 369, and aspartate 398. The active site involves aspartate 398. A coiled-coil region spans residues 450–479 (NFVRERRAMKREYEEFKVRINALVAKAQKV). Lysine 539 is a UDP-alpha-D-glucose binding site. Lysine 540 and aspartate 564 together coordinate Mn(2+). The active site involves aspartate 792. Residues 869–889 (IVYPWTSIPLLAYCTLPAICL) form a helical membrane-spanning segment. Residues 890-901 (LTGKFITPELTN) lie on the Extracellular side of the membrane. A helical membrane pass occupies residues 902–922 (IASLWFMSLFICIFATGILEM). The Cytoplasmic portion of the chain corresponds to 923–938 (RWSGVGIDDWWRNEQF). Residues 939 to 959 (WVIGGVSSHLFAVFQGLLKVI) traverse the membrane as a helical segment. The Extracellular segment spans residues 960–987 (AGIDTSFTVTSKGGDDEEFSELYTFKWT). The helical transmembrane segment at 988–1008 (TLLIPPTTLLLLNFIGVVAGV) threads the bilayer. Residues 1009 to 1019 (SNAINNGYESW) lie on the Cytoplasmic side of the membrane. The chain crosses the membrane as a helical span at residues 1020 to 1040 (GPLFGKLFFAFWVIVHLYPFL). The Extracellular portion of the chain corresponds to 1041–1049 (KGLVGRQNR). A helical membrane pass occupies residues 1050–1070 (TPTIVIVWSILLASIFSLLWV). The Cytoplasmic portion of the chain corresponds to 1071 to 1092 (RIDPFLAKNDGPLLEECGLDCN).

Belongs to the glycosyltransferase 2 family. Plant cellulose synthase subfamily. Mn(2+) serves as cofactor. Requires Zn(2+) as cofactor.

Its subcellular location is the cell membrane. It catalyses the reaction [(1-&gt;4)-beta-D-glucosyl](n) + UDP-alpha-D-glucose = [(1-&gt;4)-beta-D-glucosyl](n+1) + UDP + H(+). The protein operates within glycan metabolism; plant cellulose biosynthesis. Probable catalytic subunit of cellulose synthase terminal complexes ('rosettes'), required for beta-1,4-glucan microfibril crystallization, a major mechanism of the cell wall formation. This Oryza sativa subsp. indica (Rice) protein is Probable cellulose synthase A catalytic subunit 5 [UDP-forming] (CESA5).